The chain runs to 445 residues: Chromosomal replication initiator protein DnaA (445 aa).

Residues 1 to 69 form a domain I, interacts with DnaA modulators region; the sequence is MEKIWLEAQS…IEAISSLTNI (69 aa). Positions 69 to 108 are domain II; that stretch reads IKYQVDFKITEKSQVEKKKVDLQATEKIENDSTRNVDFNT. A domain III, AAA+ region region spans residues 109–325; it reads NLNPKYTFDS…GMLIRLGAYA (217 aa). The ATP site is built by Gly-153, Gly-155, Lys-156, and Thr-157. The domain IV, binds dsDNA stretch occupies residues 326–445; sequence SLTGSEISLN…VEKMKKELMS (120 aa).

It belongs to the DnaA family. Oligomerizes as a right-handed, spiral filament on DNA at oriC.

It localises to the cytoplasm. Plays an essential role in the initiation and regulation of chromosomal replication. ATP-DnaA binds to the origin of replication (oriC) to initiate formation of the DNA replication initiation complex once per cell cycle. Binds the DnaA box (a 9 base pair repeat at the origin) and separates the double-stranded (ds)DNA. Forms a right-handed helical filament on oriC DNA; dsDNA binds to the exterior of the filament while single-stranded (ss)DNA is stabiized in the filament's interior. The ATP-DnaA-oriC complex binds and stabilizes one strand of the AT-rich DNA unwinding element (DUE), permitting loading of DNA polymerase. After initiation quickly degrades to an ADP-DnaA complex that is not apt for DNA replication. Binds acidic phospholipids. In Geotalea daltonii (strain DSM 22248 / JCM 15807 / FRC-32) (Geobacter daltonii), this protein is Chromosomal replication initiator protein DnaA.